The sequence spans 590 residues: Aspartate--tRNA(Asp/Asn) ligase (590 aa).

Glutamate 175 serves as a coordination point for L-aspartate. The interval 199–202 (QQYK) is aspartate. L-aspartate-binding residues include arginine 221 and histidine 450. 221 to 223 (RDE) serves as a coordination point for ATP. Glutamate 484 is a binding site for ATP. L-aspartate is bound at residue arginine 491. 536–539 (GVDR) is an ATP binding site.

It belongs to the class-II aminoacyl-tRNA synthetase family. Type 1 subfamily. Homodimer.

The protein localises to the cytoplasm. It carries out the reaction tRNA(Asx) + L-aspartate + ATP = L-aspartyl-tRNA(Asx) + AMP + diphosphate. Functionally, aspartyl-tRNA synthetase with relaxed tRNA specificity since it is able to aspartylate not only its cognate tRNA(Asp) but also tRNA(Asn). Reaction proceeds in two steps: L-aspartate is first activated by ATP to form Asp-AMP and then transferred to the acceptor end of tRNA(Asp/Asn). This is Aspartate--tRNA(Asp/Asn) ligase from Nitrobacter hamburgensis (strain DSM 10229 / NCIMB 13809 / X14).